The primary structure comprises 171 residues: NADH-quinone oxidoreductase subunit I 2 (171 aa).

2 4Fe-4S ferredoxin-type domains span residues 39–71 and 81–110; these read IVLT…LSKA and EHFR…LTPD. [4Fe-4S] cluster-binding residues include C51, C54, C57, C61, C90, C93, C96, and C100.

This sequence belongs to the complex I 23 kDa subunit family. As to quaternary structure, NDH-1 is composed of 14 different subunits. Subunits NuoA, H, J, K, L, M, N constitute the membrane sector of the complex. It depends on [4Fe-4S] cluster as a cofactor.

Its subcellular location is the cell inner membrane. The catalysed reaction is a quinone + NADH + 5 H(+)(in) = a quinol + NAD(+) + 4 H(+)(out). NDH-1 shuttles electrons from NADH, via FMN and iron-sulfur (Fe-S) centers, to quinones in the respiratory chain. The immediate electron acceptor for the enzyme in this species is believed to be ubiquinone. Couples the redox reaction to proton translocation (for every two electrons transferred, four hydrogen ions are translocated across the cytoplasmic membrane), and thus conserves the redox energy in a proton gradient. This Rhodopseudomonas palustris (strain BisB18) protein is NADH-quinone oxidoreductase subunit I 2.